A 129-amino-acid chain; its full sequence is Small ribosomal subunit protein uS11 (129 aa).

The protein belongs to the universal ribosomal protein uS11 family. As to quaternary structure, part of the 30S ribosomal subunit. Interacts with proteins S7 and S18. Binds to IF-3.

Located on the platform of the 30S subunit, it bridges several disparate RNA helices of the 16S rRNA. Forms part of the Shine-Dalgarno cleft in the 70S ribosome. The protein is Small ribosomal subunit protein uS11 of Thermosipho melanesiensis (strain DSM 12029 / CIP 104789 / BI429).